Consider the following 1409-residue polypeptide: DNA-directed RNA polymerase subunit beta' (1409 aa).

Zn(2+) contacts are provided by C72, C74, C87, and C90. Positions 462, 464, and 466 each coordinate Mg(2+). Zn(2+) contacts are provided by C816, C890, C897, and C900.

The protein belongs to the RNA polymerase beta' chain family. As to quaternary structure, the RNAP catalytic core consists of 2 alpha, 1 beta, 1 beta' and 1 omega subunit. When a sigma factor is associated with the core the holoenzyme is formed, which can initiate transcription. Requires Mg(2+) as cofactor. It depends on Zn(2+) as a cofactor.

The enzyme catalyses RNA(n) + a ribonucleoside 5'-triphosphate = RNA(n+1) + diphosphate. Functionally, DNA-dependent RNA polymerase catalyzes the transcription of DNA into RNA using the four ribonucleoside triphosphates as substrates. The protein is DNA-directed RNA polymerase subunit beta' of Aromatoleum aromaticum (strain DSM 19018 / LMG 30748 / EbN1) (Azoarcus sp. (strain EbN1)).